The sequence spans 213 residues: 3-hexulose-6-phosphate synthase 2 (213 aa).

Belongs to the HPS/KGPDC family. HPS subfamily.

It catalyses the reaction D-ribulose 5-phosphate + formaldehyde = D-arabino-hex-3-ulose 6-phosphate. It participates in one-carbon metabolism; formaldehyde assimilation via RuMP pathway; D-fructose 6-phosphate from D-ribulose 5-phosphate and formaldehyde: step 1/2. Functionally, catalyzes the condensation of ribulose 5-phosphate with formaldehyde to form 3-hexulose 6-phosphate. The polypeptide is 3-hexulose-6-phosphate synthase 2 (Staphylococcus saprophyticus subsp. saprophyticus (strain ATCC 15305 / DSM 20229 / NCIMB 8711 / NCTC 7292 / S-41)).